The following is a 92-amino-acid chain: Small ribosomal subunit protein uS19 (92 aa).

The protein belongs to the universal ribosomal protein uS19 family.

Functionally, protein S19 forms a complex with S13 that binds strongly to the 16S ribosomal RNA. This chain is Small ribosomal subunit protein uS19 (rpsS), found in Halalkalibacterium halodurans (strain ATCC BAA-125 / DSM 18197 / FERM 7344 / JCM 9153 / C-125) (Bacillus halodurans).